Reading from the N-terminus, the 239-residue chain is MKVIVTENKIQGGAKAFEIFKNEIKNGAKVLGLATGSTPETLYQNFINSDLNCSNLISINLDEYVGLTPDNPQSYHYFMRKHLFDKKPFKKSYVPDGMTKDVAATCKEYDQIIKDNPIDVQLLGIGRNGHIAFNEPGTPFDIGTHEVKLTENTIKANSRFFDNEDEVPKSAICMGTANIMDAKKVVLMAFGEKKAQAIKEMIEGPVTEQVPASILQKHPDVTVIVDKAAAQELDDKYKN.

Residue Asp-62 is the Proton acceptor; for enolization step of the active site. The active-site For ring-opening step is Asn-128. His-130 functions as the Proton acceptor; for ring-opening step in the catalytic mechanism. Glu-135 acts as the For ring-opening step in catalysis.

The protein belongs to the glucosamine/galactosamine-6-phosphate isomerase family. NagB subfamily.

The enzyme catalyses alpha-D-glucosamine 6-phosphate + H2O = beta-D-fructose 6-phosphate + NH4(+). The protein operates within amino-sugar metabolism; N-acetylneuraminate degradation; D-fructose 6-phosphate from N-acetylneuraminate: step 5/5. Its function is as follows. Catalyzes the reversible isomerization-deamination of glucosamine 6-phosphate (GlcN6P) to form fructose 6-phosphate (Fru6P) and ammonium ion. The chain is Glucosamine-6-phosphate deaminase from Lactobacillus helveticus (strain DPC 4571).